Reading from the N-terminus, the 670-residue chain is MWHEARKHERKLRGMMVDYKKRAERRREYYEKIKKDPAQFLQVHGRACKVHLDSAVALAAESPVNMMPWQGDTNNMIDRFDVRAHLDHIPDYTPPLLTTISPEQESDERKCNYERYRGLVQNDFAGISEEQCLYQIYIDELYGGLQRPSEDEKKKLAEKKASIGYTYEDSTVAEVEKVTEKPEEEESPAEEESNSDEDEVIPDIDVEVDVDELNQEQVADLNKQATTYGMADGDFVRMLRKDKEEAEAIKHAKALEEEKAMYSGRRSRRQRREFREKRLRGRKISPPSYARRDSPTYDPYKRSPSESSSESRSRSRSPTPGREEKITFITSFGGSDEEAAAAAAAAAASGAATGKPPAPPQPGGPAPGRNASARRRSSTSSSSSSASRTSSSRSRSSSSSRSRRGGGYYRSGRHARSRSRSWSRSRSRSRRYSRSRSRGRRHSGGGSRDGHRYSRSPARRGGYGPRRRSRSRSRSGDRYRRGGRGPRHHSSSRSSWSLSPSRSRSLTRSRSPSLSRSRSLSRSRSQSHSPSPPREKLSRPAASPAVGEKLKKTEPAAGKETGAAKPKLTPQEKLKLRMQKALNRQFKADKKAAQEKMIQQEHERQEREDELRAMARKIRMKERERREKEREEWERQYSRQSRSPSPRYSREYSSSRRRSRSRSRSPHYRH.

Ser-101 carries the phosphoserine modification. 2 disordered regions span residues 171–232 (TVAE…GMAD) and 258–670 (EKAM…HYRH). Acidic residues predominate over residues 182 to 214 (PEEEESPAEEESNSDEDEVIPDIDVEVDVDELN). The segment covering 265–283 (RRSRRQRREFREKRLRGRK) has biased composition (basic residues). Ser-285 and Ser-294 each carry phosphoserine. Residues 290 to 313 (ARRDSPTYDPYKRSPSESSSESRS) are compositionally biased toward basic and acidic residues. Residue Thr-327 is modified to Phosphothreonine. Residues Ser-331 and Ser-335 each carry the phosphoserine modification. The segment covering 340–355 (AAAAAAAAASGAATGK) has biased composition (low complexity). The span at 356–365 (PPAPPQPGGP) shows a compositional bias: pro residues. The span at 378–400 (STSSSSSSASRTSSSRSRSSSSS) shows a compositional bias: low complexity. Composition is skewed to basic residues over residues 411-443 (SGRH…RRHS) and 481-491 (RGGRGPRHHSS). The segment covering 492-529 (SRSSWSLSPSRSRSLTRSRSPSLSRSRSLSRSRSQSHS) has biased composition (low complexity). Ser-543 is modified (phosphoserine). Thr-569 is modified (phosphothreonine). A coiled-coil region spans residues 581 to 643 (ALNRQFKADK…ERQYSRQSRS (63 aa)). Basic and acidic residues-rich tracts occupy residues 586–613 (FKAD…ELRA) and 621–637 (KERE…ERQY). The span at 638–647 (SRQSRSPSPR) shows a compositional bias: low complexity. Residues 655–670 (SRRRSRSRSRSPHYRH) are compositionally biased toward basic residues.

The protein belongs to the splicing factor SR family. Probably interacts with CLK4. In terms of processing, phosphorylated in vitro by CLK4.

It is found in the nucleus. Probably functions as an alternative splicing regulator. May regulate the mRNA splicing of genes such as CLK1. May act by regulating members of the CLK kinase family. In Bos taurus (Bovine), this protein is CLK4-associating serine/arginine rich protein (CLASRP).